A 573-amino-acid chain; its full sequence is Urease subunit alpha (573 aa).

In terms of domain architecture, Urease spans 136-573 (GGIDCHVHFI…LPMAQRYFLF (438 aa)). The Ni(2+) site is built by H141, H143, and K224. Position 224 is an N6-carboxylysine (K224). H226 serves as a coordination point for substrate. Residues H253 and H279 each coordinate Ni(2+). H327 serves as the catalytic Proton donor. Residue D367 participates in Ni(2+) binding.

The protein belongs to the metallo-dependent hydrolases superfamily. Urease alpha subunit family. Heterotrimer of UreA (gamma), UreB (beta) and UreC (alpha) subunits. Three heterotrimers associate to form the active enzyme. Ni cation serves as cofactor. Post-translationally, carboxylation allows a single lysine to coordinate two nickel ions.

It localises to the cytoplasm. It catalyses the reaction urea + 2 H2O + H(+) = hydrogencarbonate + 2 NH4(+). The protein operates within nitrogen metabolism; urea degradation; CO(2) and NH(3) from urea (urease route): step 1/1. This chain is Urease subunit alpha, found in Rhodococcus opacus (strain B4).